Here is a 304-residue protein sequence, read N- to C-terminus: Putative S-adenosyl-L-methionine-dependent methyltransferase Mjls_1071 (304 aa).

Residues Asp-130 and Asp-159–Leu-160 each bind S-adenosyl-L-methionine.

It belongs to the UPF0677 family.

Functionally, exhibits S-adenosyl-L-methionine-dependent methyltransferase activity. This is Putative S-adenosyl-L-methionine-dependent methyltransferase Mjls_1071 from Mycobacterium sp. (strain JLS).